We begin with the raw amino-acid sequence, 160 residues long: Phosphopantetheine adenylyltransferase (160 aa).

Residue threonine 10 participates in substrate binding. ATP-binding positions include 10 to 11 and histidine 18; that span reads TF. The substrate site is built by lysine 42, leucine 74, and arginine 88. Residues 89-91, glutamate 99, and 124-130 contribute to the ATP site; these read GLR and HGFLSST.

The protein belongs to the bacterial CoaD family. Homohexamer. Mg(2+) is required as a cofactor.

The protein resides in the cytoplasm. It catalyses the reaction (R)-4'-phosphopantetheine + ATP + H(+) = 3'-dephospho-CoA + diphosphate. Its pathway is cofactor biosynthesis; coenzyme A biosynthesis; CoA from (R)-pantothenate: step 4/5. Its function is as follows. Reversibly transfers an adenylyl group from ATP to 4'-phosphopantetheine, yielding dephospho-CoA (dPCoA) and pyrophosphate. The polypeptide is Phosphopantetheine adenylyltransferase (Aliivibrio fischeri (strain MJ11) (Vibrio fischeri)).